We begin with the raw amino-acid sequence, 474 residues long: Viral protein TPX (474 aa).

Residues 268–474 form a disordered region; the sequence is VTVTPISSPS…TPTSTTSSNI (207 aa). Over residues 275–365 the composition is skewed to pro residues; that stretch reads SPSPTPTPTP…PTPTPTPTPT (91 aa). A Thr-Pro(N) repeat occupies 278–367; that stretch reads PTPTPTPTPT…PTPTPTPTPT (90 aa). A 3 Thr-Pro repeats regions and two near identical repeats region spans residues 278-467; sequence PTPTPTPTPT…PTPTPTPTPT (190 aa). Residues 368–377 constitute a repeat; sequence YDITYVVFDV. Residues 378 to 436 form a Thr-Pro(N) repeat; the sequence is TPSPTPTPTPTPTPTPTPTPTPTPTPTPTPTPTPTPTPTPTPTPTPTPTPTPTPTPTPT. Residues 380-434 show a composition bias toward pro residues; the sequence is SPTPTPTPTPTPTPTPTPTPTPTPTPTPTPTPTPTPTPTPTPTPTPTPTPTPTPT. The stretch at residues 437-446 is a repeat; it reads YDITYVIFDV. One copy of the Thr-Pro(N) repeat lies at 447 to 467; that stretch reads TPSPTPTPTPTPTPTPTPTPT. The segment covering 449–465 has biased composition (pro residues); the sequence is SPTPTPTPTPTPTPTPT.

The polypeptide is Viral protein TPX (Thermoproteus tenax virus 1 (strain VT3) (TTV1)).